The chain runs to 263 residues: Phosphatidylglycerol--prolipoprotein diacylglyceryl transferase (263 aa).

4 helical membrane passes run 16 to 36, 55 to 75, 92 to 112, and 117 to 137; these read LAVS…WFYA, FVTY…ILLY, EGGM…YIFC, and LNFL…LFFG. Arg138 contributes to the a 1,2-diacyl-sn-glycero-3-phospho-(1'-sn-glycerol) binding site. 3 consecutive transmembrane segments (helical) span residues 172–192, 201–221, and 234–254; these read QLYE…YAVF, GLNS…IEIF, and SLTM…YLII.

This sequence belongs to the Lgt family.

The protein resides in the cell inner membrane. It carries out the reaction L-cysteinyl-[prolipoprotein] + a 1,2-diacyl-sn-glycero-3-phospho-(1'-sn-glycerol) = an S-1,2-diacyl-sn-glyceryl-L-cysteinyl-[prolipoprotein] + sn-glycerol 1-phosphate + H(+). It participates in protein modification; lipoprotein biosynthesis (diacylglyceryl transfer). Its function is as follows. Catalyzes the transfer of the diacylglyceryl group from phosphatidylglycerol to the sulfhydryl group of the N-terminal cysteine of a prolipoprotein, the first step in the formation of mature lipoproteins. This is Phosphatidylglycerol--prolipoprotein diacylglyceryl transferase from Rickettsia bellii (strain OSU 85-389).